Consider the following 490-residue polypeptide: Ribulose bisphosphate carboxylase large chain (490 aa).

The substrate site is built by Asn-127 and Thr-177. Lys-179 acts as the Proton acceptor in catalysis. Lys-181 contacts substrate. 3 residues coordinate Mg(2+): Lys-205, Asp-207, and Glu-208. Lys-205 carries the post-translational modification N6-carboxylysine. His-297 serves as the catalytic Proton acceptor. Arg-298, His-330, and Ser-382 together coordinate substrate.

It belongs to the RuBisCO large chain family. Type I subfamily. Heterohexadecamer of 8 large chains and 8 small chains. Mg(2+) is required as a cofactor.

The protein localises to the plastid. Its subcellular location is the chloroplast. The catalysed reaction is 2 (2R)-3-phosphoglycerate + 2 H(+) = D-ribulose 1,5-bisphosphate + CO2 + H2O. It catalyses the reaction D-ribulose 1,5-bisphosphate + O2 = 2-phosphoglycolate + (2R)-3-phosphoglycerate + 2 H(+). Its function is as follows. RuBisCO catalyzes two reactions: the carboxylation of D-ribulose 1,5-bisphosphate, the primary event in carbon dioxide fixation, as well as the oxidative fragmentation of the pentose substrate in the photorespiration process. Both reactions occur simultaneously and in competition at the same active site. The sequence is that of Ribulose bisphosphate carboxylase large chain from Trieres chinensis (Marine centric diatom).